Reading from the N-terminus, the 474-residue chain is 4-O-methyl-glucuronoyl methylesterase (474 aa).

Residues 1 to 17 (MFKPSFVALALVSYATA) form the signal peptide. One can recognise a CBM1 domain in the interval 19–55 (ASAPQWGQCGGIGWTGPTACPSGWACQQLNAYYSQCL). Residues 61-91 (APARTTAAPPPPPATTAAPPPPTTSAPTGSS) form a disordered region. Residues 68-84 (APPPPPATTAAPPPPTT) are compositionally biased toward pro residues. The N-linked (GlcNAc...) asparagine glycan is linked to N120. A GXSYXG catalytic site motif motif is present at residues 284–289 (GCSRDG). Cystine bridges form between C285/C421 and C317/C393. S286 (nucleophile) is an active-site residue. Positions 290, 332, 340, and 384 each coordinate substrate. H420 serves as the catalytic Proton donor/acceptor.

Belongs to the carbohydrate esterase 15 (CE15) family. Post-translationally, N-glycosylated.

The protein resides in the secreted. It carries out the reaction a 4-O-methyl-alpha-D-glucuronosyl ester derivative + H2O = 4-O-methyl-alpha-D-glucuronate derivative + an alcohol + H(+). Functionally, glucuronoyl esterase which may play a significant role in biomass degradation, as it is considered to disconnect hemicellulose from lignin through the hydrolysis of the ester bond between 4-O-methyl-D-glucuronic acid residues of glucuronoxylans and aromatic alcohols of lignin. The chain is 4-O-methyl-glucuronoyl methylesterase from Cerrena unicolor (Canker rot fungus).